Here is a 142-residue protein sequence, read N- to C-terminus: Multiprotein-bridging factor 1b (142 aa).

A disordered region spans residues 49 to 75 (NAGSNKAASSGTSLNTKKLDDDTENLS). Over residues 50–64 (AGSNKAASSGTSLNT) the composition is skewed to polar residues. The span at 65 to 75 (KKLDDDTENLS) shows a compositional bias: basic and acidic residues. The region spanning 87 to 141 (IMQARGEKKLTQSQLAHLINEKPQVIQEYESGKAIPNQQILSKLERALGAKLRGK) is the HTH cro/C1-type domain. Residues 98-117 (QSQLAHLINEKPQVIQEYES) constitute a DNA-binding region (H-T-H motif).

Belongs to the MBF1 family. Expressed in leaves, roots, stems, petioles and shoots. Higher expression in flowers and siliques. Detected in leaf veins through development.

The protein localises to the nucleus. It localises to the nucleolus. Its function is as follows. Transcriptional coactivator that stimulates transcriptional activity by bridging regulatory proteins and TBP, thereby recruiting TBP to promoters occupied by DNA-binding regulators. This Arabidopsis thaliana (Mouse-ear cress) protein is Multiprotein-bridging factor 1b (MBF1B).